We begin with the raw amino-acid sequence, 326 residues long: Aspartate--ammonia ligase (326 aa).

This sequence belongs to the class-II aminoacyl-tRNA synthetase family. AsnA subfamily.

It is found in the cytoplasm. It catalyses the reaction L-aspartate + NH4(+) + ATP = L-asparagine + AMP + diphosphate + H(+). It participates in amino-acid biosynthesis; L-asparagine biosynthesis; L-asparagine from L-aspartate (ammonia route): step 1/1. This is Aspartate--ammonia ligase from Malacoplasma penetrans (strain HF-2) (Mycoplasma penetrans).